We begin with the raw amino-acid sequence, 356 residues long: Aromatic dipeptide epimerase (356 aa).

Substrate-binding positions include T136 and 161-163; that span reads KVK. Mg(2+)-binding residues include D191, E219, and D244. Substrate-binding positions include K268 and 320 to 322; that span reads DLD.

This sequence belongs to the mandelate racemase/muconate lactonizing enzyme family. It depends on Mg(2+) as a cofactor.

Functionally, has epimerase activity with a variety of hydrophobic dipeptides (in vitro). Enzyme activity is highest with L-Phe-L-Tyr, but is still relatively low, suggesting that L-Phe-L-Tyr is not the physiological substrate. The chain is Aromatic dipeptide epimerase from Herpetosiphon aurantiacus (strain ATCC 23779 / DSM 785 / 114-95).